The chain runs to 418 residues: MDKLVIEGPCQLEGSVQISGAKNAALPILMGCLLSETPVVLSNVPHLKDVTTTIQLLATMGVEVMFDEELNIEIDASNITTKEAPYELVKTMRASILTMGPLLARFGEAKVSLPGGCAIGSRPVNIHIEGMQKMGAEIKVEQGYIIATADRLVGADITMEPVTVTGTENLLMAAVLAEGRTTLRNAAKEPEVSDLAHFLNKMGAKITGIDTDTLVIEGVEKLTGVSYRVIPDRIEAGTYLAAAALTKSCVTVKDVVPEHLTAVLDKFTEAGALVTTTDNTITLDMRNRSLKPVNIVTDPYPAFPTDMQAQFVVMNCLAEGEANVEETIFENRFMHVSELVRMGADIHVEGNVAHTKGVDHLIGAPVMATDLRASASLILAGLVAKGETVVSRIYHIDRGYELIEEKFHKLGAHIYRAN.

22–23 (KN) provides a ligand contact to phosphoenolpyruvate. A UDP-N-acetyl-alpha-D-glucosamine-binding site is contributed by R93. Catalysis depends on C117, which acts as the Proton donor. A 2-(S-cysteinyl)pyruvic acid O-phosphothioketal modification is found at C117. Positions 306 and 328 each coordinate UDP-N-acetyl-alpha-D-glucosamine.

This sequence belongs to the EPSP synthase family. MurA subfamily.

It is found in the cytoplasm. It catalyses the reaction phosphoenolpyruvate + UDP-N-acetyl-alpha-D-glucosamine = UDP-N-acetyl-3-O-(1-carboxyvinyl)-alpha-D-glucosamine + phosphate. It functions in the pathway cell wall biogenesis; peptidoglycan biosynthesis. Its function is as follows. Cell wall formation. Adds enolpyruvyl to UDP-N-acetylglucosamine. This chain is UDP-N-acetylglucosamine 1-carboxyvinyltransferase, found in Hydrogenovibrio crunogenus (strain DSM 25203 / XCL-2) (Thiomicrospira crunogena).